The sequence spans 601 residues: Potassium voltage-gated channel subfamily A member 5 (601 aa).

A tetramerization domain region spans residues 1–200 (MEIALVPLEN…FYQLGDEAME (200 aa)). At 1-236 (MEIALVPLEN…LIFEYPESSG (236 aa)) the chain is on the cytoplasmic side. Residues 19 to 93 (GGEAGTGCSQ…DEEGEGDPAL (75 aa)) are disordered. Residues 65 to 74 (RPLPPLPQDP) are compositionally biased toward pro residues. Residue Lys210 forms a Glycyl lysine isopeptide (Lys-Gly) (interchain with G-Cter in SUMO) linkage. Residues 237–258 (SARGIAIVSVLVILISIITFCL) form a helical membrane-spanning segment. Residues 259 to 312 (ETLPEFRDERELLRHPPVPHQPLGPSRGANGSGPLAPPSGPTVAPLLPRTLADP) lie on the Extracellular side of the membrane. Residues 275–297 (PVPHQPLGPSRGANGSGPLAPPS) are disordered. The N-linked (GlcNAc...) asparagine glycan is linked to Asn288. A helical transmembrane segment spans residues 313-334 (FFIVETTCVIWFTFELLVRFFA). Cys335 carries S-palmitoyl cysteine lipidation. Residues 335 to 345 (CPSKAEFSRNI) are Cytoplasmic-facing. The chain crosses the membrane as a helical span at residues 346-366 (MNIIDVVAIFPYFITLGTELA). The Extracellular portion of the chain corresponds to 367-383 (EQPGGGGGGQNGQQAMS). A helical; Voltage-sensor transmembrane segment spans residues 384 to 404 (LAILRVIRLVRVFRIFKLSRH). The Cytoplasmic portion of the chain corresponds to 405 to 419 (SKGLQILGKTLQASM). The tract at residues 406–419 (KGLQILGKTLQASM) is S4-S5 linker. A helical membrane pass occupies residues 420–441 (RELGLLIFFLFIGVILFSSAVY). At 442–455 (FAEADNQETHFSSI) the chain is on the extracellular side. Positions 456 to 467 (PDAFWWAVVTMT) form an intramembrane region, helical. A Selectivity filter motif is present at residues 468-473 (TVGYGD). An intramembrane segment occupies 468 to 475 (TVGYGDMR). The Extracellular segment spans residues 476–482 (PVTVGGK). Residues 483 to 511 (IVGSLCAIAGVLTIALPVPVIVSNFNYFY) traverse the membrane as a helical segment. The Cytoplasmic segment spans residues 512–601 (HRETDHEEQA…CLDTSRETDL (90 aa)). Positions 521–545 (AALKEEQGSQSHGTGLDSGGPRKAS) are disordered. Residue Lys524 forms a Glycyl lysine isopeptide (Lys-Gly) (interchain with G-Cter in SUMO) linkage. The PDZ-binding motif lies at 599–601 (TDL).

Belongs to the potassium channel family. A (Shaker) (TC 1.A.1.2) subfamily. Kv1.5/KCNA5 sub-subfamily. As to quaternary structure, homotetramer and heterotetramer of potassium channel proteins. Interacts with DLG1, which enhances channel currents. Forms a ternary complex with DLG1 and CAV3. Interacts with KCNAB1. Interacts with UBE2I. Interacts with XIRP2; the interaction is required for normal action potential configuration in the heart. Post-translationally, glycosylated. Sumoylated on Lys-210, and Lys-524, preferentially with SUMO3. Sumoylation regulates the voltage sensitivity of the channel.

The protein resides in the cell membrane. It carries out the reaction K(+)(in) = K(+)(out). Voltage-gated potassium channel that mediates transmembrane potassium transport in excitable membranes. Forms tetrameric potassium-selective channels through which potassium ions pass in accordance with their electrochemical gradient. The channel alternates between opened and closed conformations in response to the voltage difference across the membrane. Can form functional homotetrameric channels and heterotetrameric channels that contain variable proportions of KCNA1, KCNA2, KCNA4, KCNA5, and possibly other family members as well; channel properties depend on the type of alpha subunits that are part of the channel. Channel properties are modulated by cytoplasmic beta subunits that regulate the subcellular location of the alpha subunits and promote rapid inactivation. Homotetrameric channels display rapid activation and slow inactivation. Required for normal electrical conduction including formation of the infranodal ventricular conduction system and normal action potential configuration, as a result of its interaction with XIRP2. May play a role in regulating the secretion of insulin in normal pancreatic islets. The protein is Potassium voltage-gated channel subfamily A member 5 (KCNA5) of Mustela putorius furo (European domestic ferret).